A 751-amino-acid polypeptide reads, in one-letter code: Semaphorin-3C (751 aa).

The signal sequence occupies residues 1–21; that stretch reads MAVLALHAVFGIFIYFSSVKG. A Sema domain is found at 28-511; that stretch reads RVFLTFNELQ…SEEGVTQVPL (484 aa). N-linked (GlcNAc...) asparagine glycosylation is present at Asn81. Cys101 and Cys112 are joined by a disulfide. The N-linked (GlcNAc...) asparagine glycan is linked to Asn123. Intrachain disulfides connect Cys130-Cys139, Cys266-Cys378, and Cys290-Cys338. N-linked (GlcNAc...) asparagine glycosylation is present at Asn268. An N-linked (GlcNAc...) asparagine glycan is attached at Asn465. A disulfide bridge links Cys514 with Cys532. Positions 571 to 655 constitute an Ig-like C2-type domain; it reads AYRNAAETVQ…TENNFKQTLA (85 aa). Asn585 and Asn586 each carry an N-linked (GlcNAc...) asparagine glycan. An intrachain disulfide couples Cys643 to Cys709. A compositionally biased stretch (basic and acidic residues) spans 712–731; the sequence is SRQQGQRREEPQKMRGDYSK. Residues 712–751 form a disordered region; the sequence is SRQQGQRREEPQKMRGDYSKLKALINSRKSRNRRNQLPAS.

Belongs to the semaphorin family. In terms of tissue distribution, collapsin-1, -2, -3, and -5 bind to overlapping but distinct axon tracts.

The protein localises to the secreted. In terms of biological role, induces the collapse and paralysis of neuronal growth cones. Could potentially act as repulsive cues toward specific neuronal populations. Binds to neuropilin. In Gallus gallus (Chicken), this protein is Semaphorin-3C (SEMA3C).